The sequence spans 79 residues: Large ribosomal subunit protein uL22 (79 aa).

The protein belongs to the universal ribosomal protein uL22 family. In terms of assembly, part of the 50S ribosomal subunit.

Functionally, this protein binds specifically to 23S rRNA; its binding is stimulated by other ribosomal proteins, e.g. L4, L17, and L20. It is important during the early stages of 50S assembly. It makes multiple contacts with different domains of the 23S rRNA in the assembled 50S subunit and ribosome. The globular domain of the protein is located near the polypeptide exit tunnel on the outside of the subunit, while an extended beta-hairpin is found that lines the wall of the exit tunnel in the center of the 70S ribosome. The chain is Large ribosomal subunit protein uL22 (rplV) from Prunus armeniaca phytoplasma.